A 424-amino-acid polypeptide reads, in one-letter code: Virion nicking-joining enzyme (424 aa).

2 consecutive PLD phosphodiesterase domains span residues 110–137 and 320–346; these read LGGVLHTKFWISDNTHIYLGSANMDWRS and YSRVNHAKYMVTDKTAYIGTSNWTGNY.

The protein belongs to the orthopoxvirus OPG042 family.

The protein localises to the virion. DNA nicking enzyme that cleaves extruded cruciform DNA at its tip. Probably nicks viral hairpins. In Homo sapiens (Human), this protein is Virion nicking-joining enzyme (OPG042).